Consider the following 322-residue polypeptide: N-acetyl-gamma-glutamyl-phosphate reductase (322 aa).

Cys117 is a catalytic residue.

This sequence belongs to the NAGSA dehydrogenase family. Type 2 subfamily.

It is found in the cytoplasm. It catalyses the reaction N-acetyl-L-glutamate 5-semialdehyde + phosphate + NADP(+) = N-acetyl-L-glutamyl 5-phosphate + NADPH + H(+). It participates in amino-acid biosynthesis; L-arginine biosynthesis; N(2)-acetyl-L-ornithine from L-glutamate: step 3/4. Functionally, catalyzes the NADPH-dependent reduction of N-acetyl-5-glutamyl phosphate to yield N-acetyl-L-glutamate 5-semialdehyde. This chain is N-acetyl-gamma-glutamyl-phosphate reductase, found in Trichormus variabilis (strain ATCC 29413 / PCC 7937) (Anabaena variabilis).